The sequence spans 658 residues: UvrABC system protein B (658 aa).

The Helicase ATP-binding domain maps to 25-416 (QFIHNGAQYS…QEHIAEQIIR (392 aa)). 38–45 (GVTGSGKT) is a binding site for ATP. The Beta-hairpin motif lies at 91–114 (HFDYYQPEAYIPRRDLFIEKDSSI). In terms of domain architecture, Helicase C-terminal spans 433–607 (AVLDLYDEIK…ELKIESSGLS (175 aa)). The 36-residue stretch at 623 to 658 (ESIIKELNIKMHQAAKALEFEEAARLRDEIARIRTM) folds into the UVR domain.

Belongs to the UvrB family. As to quaternary structure, forms a heterotetramer with UvrA during the search for lesions. Interacts with UvrC in an incision complex.

The protein localises to the cytoplasm. The UvrABC repair system catalyzes the recognition and processing of DNA lesions. A damage recognition complex composed of 2 UvrA and 2 UvrB subunits scans DNA for abnormalities. Upon binding of the UvrA(2)B(2) complex to a putative damaged site, the DNA wraps around one UvrB monomer. DNA wrap is dependent on ATP binding by UvrB and probably causes local melting of the DNA helix, facilitating insertion of UvrB beta-hairpin between the DNA strands. Then UvrB probes one DNA strand for the presence of a lesion. If a lesion is found the UvrA subunits dissociate and the UvrB-DNA preincision complex is formed. This complex is subsequently bound by UvrC and the second UvrB is released. If no lesion is found, the DNA wraps around the other UvrB subunit that will check the other stand for damage. The sequence is that of UvrABC system protein B from Helicobacter hepaticus (strain ATCC 51449 / 3B1).